We begin with the raw amino-acid sequence, 619 residues long: DNA mismatch repair protein MutL (619 aa).

Residues 358-401 (GGNQFARPSEAREAATRFSITSSREPAASGGSSGGASWPHAQPG) are disordered.

Belongs to the DNA mismatch repair MutL/HexB family.

Functionally, this protein is involved in the repair of mismatches in DNA. It is required for dam-dependent methyl-directed DNA mismatch repair. May act as a 'molecular matchmaker', a protein that promotes the formation of a stable complex between two or more DNA-binding proteins in an ATP-dependent manner without itself being part of a final effector complex. The chain is DNA mismatch repair protein MutL from Klebsiella pneumoniae (strain 342).